A 422-amino-acid polypeptide reads, in one-letter code: uncharacterized protein (422 aa).

It belongs to the asfivirus K421R family.

The protein localises to the virion. This is an uncharacterized protein from Ornithodoros (relapsing fever ticks).